The sequence spans 129 residues: D-ribose pyranase 1 (129 aa).

His-20 (proton donor) is an active-site residue. Residues Asp-28, His-96, and 118–120 (YSN) contribute to the substrate site.

It belongs to the RbsD / FucU family. RbsD subfamily. In terms of assembly, homodecamer.

Its subcellular location is the cytoplasm. It carries out the reaction beta-D-ribopyranose = beta-D-ribofuranose. It participates in carbohydrate metabolism; D-ribose degradation; D-ribose 5-phosphate from beta-D-ribopyranose: step 1/2. In terms of biological role, catalyzes the interconversion of beta-pyran and beta-furan forms of D-ribose. The sequence is that of D-ribose pyranase 1 from Rubrobacter xylanophilus (strain DSM 9941 / JCM 11954 / NBRC 16129 / PRD-1).